We begin with the raw amino-acid sequence, 658 residues long: ATP-dependent RNA helicase DDX3Y (658 aa).

The segment at 1 to 143 (MSQVAAESTA…DWSKPLPPSE (143 aa)) is disordered. Serine 2 is subject to N-acetylserine. Over residues 45–69 (RNRETSKGVCDKDSSGWSCSKDKDA) the composition is skewed to basic and acidic residues. Lysine 56 carries the N6-acetyllysine modification. A phosphoserine mark is found at serine 86 and serine 90. The segment covering 94–129 (GRFDDHGRNDYDGIGGRDRTGFGKFERSGHSRWSDR) has biased composition (basic and acidic residues). The residue at position 101 (arginine 101) is an Omega-N-methylarginine. Position 104 is a phosphotyrosine (tyrosine 104). Omega-N-methylarginine is present on arginine 110. Position 117 is an N6-acetyllysine (lysine 117). Serine 130 and serine 182 each carry phosphoserine. A Q motif motif is present at residues 179–207 (ENFSDIEMGEIIMGNIELTRYTRPTPVQK). 199 to 206 (YTRPTPVQ) is a binding site for ATP. Residues 210–402 (IPIIKEKRDL…RDFLDEYIFL (193 aa)) enclose the Helicase ATP-binding domain. A Glycyl lysine isopeptide (Lys-Gly) (interchain with G-Cter in SUMO2) cross-link involves residue lysine 214. 223 to 230 (AQTGSGKT) is a binding site for ATP. The DEAD box motif lies at 346-349 (DEAD). In terms of domain architecture, Helicase C-terminal spans 413 to 574 (NITQKVVWVE…EVPSWLESMA (162 aa)). Residue serine 455 is modified to Phosphoserine. Arginine 590 is modified (omega-N-methylarginine). 2 positions are modified to phosphoserine: serine 592 and serine 603. A disordered region spans residues 597–627 (ARDYRQSSGSANAGFNSNRANSSRSSGSSHN). Over residues 603–627 (SSGSANAGFNSNRANSSRSSGSSHN) the composition is skewed to low complexity. Omega-N-methylarginine occurs at positions 615 and 628.

Belongs to the DEAD box helicase family. DDX3/DED1 subfamily. As to expression, found in heart, brain, liver, skeletal muscle, kidney and testis. Low expression detected in lung. In testis, expressed in all types of spermatogenic cells including spermatogonia, spermatocytes, spermatids and somatic Sertoli cells within the seminiferous tubules. Also expressed in Leydig cells and other interstitial cells.

It localises to the cytoplasm. The protein resides in the nucleus. It carries out the reaction ATP + H2O = ADP + phosphate + H(+). Probable ATP-dependent RNA helicase. During immune response, may enhance IFNB1 expression via IRF3/IRF7 pathway. The polypeptide is ATP-dependent RNA helicase DDX3Y (Ddx3y) (Mus musculus (Mouse)).